The following is a 549-amino-acid chain: E-selectin (549 aa).

The N-terminal stretch at 1–21 is a signal peptide; the sequence is MNASCFLSALTFVLLIGKSIA. One can recognise a C-type lectin domain in the interval 22–139; sequence WYYNASSELM…CDKKKLALCY (118 aa). Over 22 to 494 the chain is Extracellular; that stretch reads WYYNASSELM…CEAPANPPRP (473 aa). N-linked (GlcNAc...) asparagine glycosylation is found at Asn-25 and Asn-60. 17 disulfides stabilise this stretch: Cys-40/Cys-138, Cys-111/Cys-130, Cys-143/Cys-154, Cys-148/Cys-163, Cys-165/Cys-174, Cys-180/Cys-225, Cys-193/Cys-206, Cys-210/Cys-238, Cys-243/Cys-287, Cys-256/Cys-269, Cys-273/Cys-300, Cys-305/Cys-350, Cys-336/Cys-363, Cys-368/Cys-413, Cys-399/Cys-426, Cys-431/Cys-472, and Cys-458/Cys-485. The Ca(2+) site is built by Glu-101, Asn-103, and Glu-109. Residues 101–109, 113–118, and 126–128 each bind a carbohydrate; these read EPNNKQRNE, EIYIQR, and NDE. Positions 126 and 127 each coordinate Ca(2+). Residues 140–175 enclose the EGF-like domain; sequence TASCTNTSCSGHGECVETINSYTCKCHPGFLGPKCD. Asn-145 carries N-linked (GlcNAc...) asparagine glycosylation. Sushi domains lie at 178–240, 241–302, 303–365, 366–428, and 429–487; these read VTCQ…ACHV, VECK…SCKA, VTCD…VCKA, SQCE…TCAG, and VQCS…TCEA. Asn-192 and Asn-203 each carry an N-linked (GlcNAc...) asparagine glycan. The N-linked (GlcNAc...) asparagine glycan is linked to Asn-266. Asn-313, Asn-320, and Asn-333 each carry an N-linked (GlcNAc...) asparagine glycan. N-linked (GlcNAc...) asparagine glycosylation is found at Asn-441 and Asn-465. A helical transmembrane segment spans residues 495-516; it reads LVVALSVAATSLLTLSSLIYVL. Topologically, residues 517–549 are cytoplasmic; sequence KRFFWKKAKKFVPASSCQSLQSFENYQGPSYII.

It belongs to the selectin/LECAM family. Interacts with SELPLG/PSGL1 and PODXL2 through the sialyl Lewis X epitope. SELPLG sulfation appears not to be required for this interaction.

It is found in the cell membrane. Its function is as follows. Cell-surface glycoprotein having a role in immunoadhesion. Mediates in the adhesion of blood neutrophils in cytokine-activated endothelium through interaction with SELPLG/PSGL1. May have a role in capillary morphogenesis. The sequence is that of E-selectin (Sele) from Rattus norvegicus (Rat).